Consider the following 124-residue polypeptide: Translation initiation factor 5A (124 aa).

Residues 27 to 53 (TSYSTSKPGKHGSAKARVEGTGVFDGQ) form a disordered region. Lys-36 is modified (hypusine).

The protein belongs to the eIF-5A family.

It is found in the cytoplasm. Its function is as follows. Functions by promoting the formation of the first peptide bond. The polypeptide is Translation initiation factor 5A (Natronomonas pharaonis (strain ATCC 35678 / DSM 2160 / CIP 103997 / JCM 8858 / NBRC 14720 / NCIMB 2260 / Gabara) (Halobacterium pharaonis)).